Reading from the N-terminus, the 643-residue chain is Long-chain fatty acid transport protein 4 (643 aa).

Helical transmembrane passes span Leu-20 to Ile-42 and Phe-139 to Ile-156. Tyr-243 to Lys-254 contributes to the AMP binding site.

This sequence belongs to the ATP-dependent AMP-binding enzyme family. As to expression, expressed at highest levels in brain, testis, colon and kidney. Expressed at medium levels in heart and liver, small intestine and stomach. Expressed at low levels in peripheral leukocytes, bone marrow, skeletal muscle and aorta. Expressed in adipose tissue. Expressed in brain gray matter.

Its subcellular location is the endoplasmic reticulum membrane. The enzyme catalyses a fatty acid(in) = a fatty acid(out). The catalysed reaction is (9Z,12Z)-octadecadienoate(out) = (9Z,12Z)-octadecadienoate(in). It catalyses the reaction (9Z)-octadecenoate(out) = (9Z)-octadecenoate(in). It carries out the reaction hexadecanoate(out) = hexadecanoate(in). The enzyme catalyses a long-chain fatty acid + ATP + CoA = a long-chain fatty acyl-CoA + AMP + diphosphate. The catalysed reaction is hexadecanoate + ATP + CoA = hexadecanoyl-CoA + AMP + diphosphate. It catalyses the reaction (E)-hexadec-2-enoate + ATP + CoA = (2E)-hexadecenoyl-CoA + AMP + diphosphate. It carries out the reaction (9Z)-octadecenoate + ATP + CoA = (9Z)-octadecenoyl-CoA + AMP + diphosphate. The enzyme catalyses (5Z,8Z,11Z,14Z)-eicosatetraenoate + ATP + CoA = (5Z,8Z,11Z,14Z)-eicosatetraenoyl-CoA + AMP + diphosphate. The catalysed reaction is a very long-chain fatty acid + ATP + CoA = a very long-chain fatty acyl-CoA + AMP + diphosphate. It catalyses the reaction tetracosanoate + ATP + CoA = tetracosanoyl-CoA + AMP + diphosphate. In terms of biological role, mediates the levels of long-chain fatty acids (LCFA) in the cell by facilitating their transport across cell membranes. Appears to be the principal fatty acid transporter in small intestinal enterocytes. Also functions as an acyl-CoA ligase catalyzing the ATP-dependent formation of fatty acyl-CoA using LCFA and very-long-chain fatty acids (VLCFA) as substrates, which prevents fatty acid efflux from cells and might drive more fatty acid uptake. Plays a role in the formation of the epidermal barrier. Required for fat absorption in early embryogenesis. Probably involved in fatty acid transport across the blood barrier. Indirectly inhibits RPE65 via substrate competition and via production of VLCFA derivatives like lignoceroyl-CoA. Prevents light-induced degeneration of rods and cones. The polypeptide is Long-chain fatty acid transport protein 4 (Homo sapiens (Human)).